A 475-amino-acid polypeptide reads, in one-letter code: Ribulose bisphosphate carboxylase large chain (475 aa).

Residues Met-1–Ser-2 constitute a propeptide that is removed on maturation. N-acetylproline is present on Pro-3. At Lys-14 the chain carries N6,N6,N6-trimethyllysine. The substrate site is built by Asn-123 and Thr-173. The Proton acceptor role is filled by Lys-175. Lys-177 lines the substrate pocket. Residues Lys-201, Asp-203, and Glu-204 each coordinate Mg(2+). The residue at position 201 (Lys-201) is an N6-carboxylysine. Residue His-294 is the Proton acceptor of the active site. 3 residues coordinate substrate: Arg-295, His-327, and Ser-379.

Belongs to the RuBisCO large chain family. Type I subfamily. In terms of assembly, heterohexadecamer of 8 large chains and 8 small chains; disulfide-linked. The disulfide link is formed within the large subunit homodimers. It depends on Mg(2+) as a cofactor. In terms of processing, the disulfide bond which can form in the large chain dimeric partners within the hexadecamer appears to be associated with oxidative stress and protein turnover.

Its subcellular location is the plastid. The protein resides in the chloroplast. It catalyses the reaction 2 (2R)-3-phosphoglycerate + 2 H(+) = D-ribulose 1,5-bisphosphate + CO2 + H2O. It carries out the reaction D-ribulose 1,5-bisphosphate + O2 = 2-phosphoglycolate + (2R)-3-phosphoglycerate + 2 H(+). RuBisCO catalyzes two reactions: the carboxylation of D-ribulose 1,5-bisphosphate, the primary event in carbon dioxide fixation, as well as the oxidative fragmentation of the pentose substrate in the photorespiration process. Both reactions occur simultaneously and in competition at the same active site. The sequence is that of Ribulose bisphosphate carboxylase large chain from Adiantum capillus-veneris (Maidenhair fern).